Consider the following 1165-residue polypeptide: Adhesion G-protein coupled receptor G6 (1165 aa).

Residues 1 to 30 (MMFDTLGKRCCPWRLKPSALLFLFVLCVTC) form the signal peptide. The Extracellular segment spans residues 31–832 (VPLSVCGCGS…ASQIDGRNTK (802 aa)). Cys41 and Cys67 are joined by a disulfide. One can recognise a CUB domain in the interval 41–149 (CRLVLSNPSG…KGFNASYIRV (109 aa)). Ca(2+)-binding residues include Glu89 and Asp97. The cysteines at positions 94 and 111 are disulfide-linked. Asn121 carries an N-linked (GlcNAc...) asparagine glycan. 3 residues coordinate Ca(2+): Asp134, Ser136, and Ile137. N-linked (GlcNAc...) asparagine glycosylation occurs at Asn143. A Pentraxin (PTX) domain is found at 154 to 356 (RNQKVILPQT…ALKAEGNLSC (203 aa)). 2 cysteine pairs are disulfide-bonded: Cys186-Cys254 and Cys231-Cys277. N-linked (GlcNAc...) asparagine glycosylation is found at Asn258, Asn314, Asn324, Asn353, Asn370, Asn410, Asn417, Asn424, Asn458, Asn462, and Asn478. Positions 446-807 (DKRLVLWALL…LDAGETICLC (362 aa)) are mediates interaction with laminin-2. 2 cysteine pairs are disulfide-bonded: Cys498-Cys533 and Cys521-Cys550. N-linked (GlcNAc...) asparagine glycans are attached at residues Asn536, Asn549, Asn563, Asn570, Asn665, Asn674, Asn720, Asn746, Asn781, and Asn788. Positions 640-823 (PHVNIETQNL…GVLMDLPRSA (184 aa)) constitute a GAIN-B domain. 2 disulfides stabilise this stretch: Cys773/Cys805 and Cys792/Cys807. The segment at 773 to 823 (CAFWDMNKNKSFGGWNTSGCVAHSDLDAGETICLCSHFTHFGVLMDLPRSA) is GPS. The interval 812 to 820 (HFGVLMDLP) is stachel. The helical transmembrane segment at 833–853 (VLTFITYIGCGISAIFSAATL) threads the bilayer. Residues 854–873 (LTYVAFEKLRRDYPSKILMN) are Cytoplasmic-facing. Residues 874-894 (LSSALLFLNLIFLLDGWVTSF) traverse the membrane as a helical segment. At 895 to 899 (GVAGL) the chain is on the extracellular side. Residues 900–920 (CTAVAALLHFFLLATFTWMGL) form a helical membrane-spanning segment. The Cytoplasmic portion of the chain corresponds to 921-940 (EAIHMYIALVKVFNTYIHRY). Residues 941–961 (ILKFCIIGWGLPALVVSIILV) traverse the membrane as a helical segment. Over 962 to 994 (SRRQNEVYGKESYGKDQDDEFCWIQDPVVFYVS) the chain is Extracellular. The helical transmembrane segment at 995 to 1015 (CAGYFGVMFFLNVAMFIVVMV) threads the bilayer. Residues 1016–1039 (QICGRNGKRSNRTLREEVLRNLRS) are Cytoplasmic-facing. The chain crosses the membrane as a helical span at residues 1040-1060 (VVSLTFLLGMTWGFAFFAWGP). At 1061-1062 (LN) the chain is on the extracellular side. Residues 1063–1083 (IPFMYLFSIFNSLQGLFIFIF) form a helical membrane-spanning segment. Asn1073 serves as a coordination point for 17alpha-hydroxyprogesterone. Over 1084 to 1165 (HCAMKENVQK…KRNSHSDNFS (82 aa)) the chain is Cytoplasmic. Over residues 1126 to 1154 (NLGKSLSSSSIGSNSTYLTSKSKSSSTTY) the composition is skewed to low complexity. Residues 1126–1165 (NLGKSLSSSSIGSNSTYLTSKSKSSSTTYFKRNSHSDNFS) form a disordered region. A phosphoserine mark is found at Ser1135 and Ser1138.

This sequence belongs to the G-protein coupled receptor 2 family. Adhesion G-protein coupled receptor (ADGR) subfamily. In terms of assembly, heterodimer of 2 chains generated by proteolytic processing; the large extracellular N-terminal fragment and the membrane-bound C-terminal fragment predominantly remain associated and non-covalently linked. Interacts with Laminin-2; this interaction stabilizes the receptor in an inactive state. Laminin-2 polymerization could facilitate ADGRG6-NTF removal, thereby exposing the tethered agonist to drive myelination. Interacts with PRNP. Interacts with ITGB1. Interacts with LRP1. In terms of processing, proteolytically cleaved into 2 conserved sites: one in the GPS region of the GAIN-B domain (S1 site) and the other in the middle of the extracellular domain (S2 site). The proteolytic cleavage at S1 site generates an extracellular subunit and a seven-transmembrane subunit. Furin is involved in the cleavage of the S2 site generating a soluble fragment. Processing at the GPS region occurred independent of and probably prior to the cleavage at the S2 site. Proteolytic cleavage is required for activation of the receptor. Expressed at high levels in the heart, somite and otic vesicle during embryogenesis and in adult lung.

It localises to the cell membrane. Its activity is regulated as follows. Forms a heterodimer of 2 chains generated by proteolytic processing that remain associated through non-covalent interactions mediated by the GAIN-B domain. In the inactivated receptor, the Stachel sequence (also named stalk) is embedded in the GAIN-B domain, where it adopts a beta-strand conformation. On activation, the Stachel moves into the 7 transmembrane region and adopts a twisted hook-shaped configuration that forms contacts within the receptor, leading to coupling of a G-alpha protein, which activates signaling. The cleaved GAIN-B and N-terminal domains can then dissociate from the rest of the receptor. In terms of biological role, adhesion G-protein coupled receptor (aGPCR) for steroid hormones, such as progesterone and 17alpha-hydroxyprogesterone (17OHP). Involved in many biological processes, such as myelination, sprouting angiogenesis, placenta, ear and cartilage development. Ligand binding causes a conformation change that triggers signaling via guanine nucleotide-binding proteins (G proteins) and modulates the activity of downstream effectors, such as adenylate cyclase. ADGRG6 is coupled to G(i) G alpha proteins and mediates inhibition of adenylate cyclase. Also able to couple to G(q) G proteins. Involved in myelination of the peripheral nervous system: required for differentiation of promyelinating Schwann cells and for normal myelination of axons. Also acts as a regulator of body length and bone mass. Acts as a regulator of blood-brain barrier formation in the central nervous system vie its association with LRP1 and ITGB1. The polypeptide is Adhesion G-protein coupled receptor G6 (Mus musculus (Mouse)).